Here is a 101-residue protein sequence, read N- to C-terminus: NAD(P)H-quinone oxidoreductase subunit 4L, chloroplastic (101 aa).

3 helical membrane passes run 2–22, 32–52, and 61–81; these read IFEH…YGLI, MCLE…SDFF, and IFSI…PAIV.

It belongs to the complex I subunit 4L family. NDH is composed of at least 16 different subunits, 5 of which are encoded in the nucleus.

The protein resides in the plastid. Its subcellular location is the chloroplast thylakoid membrane. It catalyses the reaction a plastoquinone + NADH + (n+1) H(+)(in) = a plastoquinol + NAD(+) + n H(+)(out). It carries out the reaction a plastoquinone + NADPH + (n+1) H(+)(in) = a plastoquinol + NADP(+) + n H(+)(out). Its function is as follows. NDH shuttles electrons from NAD(P)H:plastoquinone, via FMN and iron-sulfur (Fe-S) centers, to quinones in the photosynthetic chain and possibly in a chloroplast respiratory chain. The immediate electron acceptor for the enzyme in this species is believed to be plastoquinone. Couples the redox reaction to proton translocation, and thus conserves the redox energy in a proton gradient. The polypeptide is NAD(P)H-quinone oxidoreductase subunit 4L, chloroplastic (Glycine max (Soybean)).